Reading from the N-terminus, the 248-residue chain is Ribosomal RNA small subunit methyltransferase J (248 aa).

S-adenosyl-L-methionine contacts are provided by residues 98–99 (RD), 114–115 (ER), 150–151 (SS), and D168.

This sequence belongs to the methyltransferase superfamily. RsmJ family.

It localises to the cytoplasm. It carries out the reaction guanosine(1516) in 16S rRNA + S-adenosyl-L-methionine = N(2)-methylguanosine(1516) in 16S rRNA + S-adenosyl-L-homocysteine + H(+). In terms of biological role, specifically methylates the guanosine in position 1516 of 16S rRNA. The polypeptide is Ribosomal RNA small subunit methyltransferase J (Shewanella denitrificans (strain OS217 / ATCC BAA-1090 / DSM 15013)).